The chain runs to 88 residues: Small ribosomal subunit protein bS20 (88 aa).

Positions 1–27 (MANSKSAKKRALQSEKRRQHNASRRSM) are disordered.

Belongs to the bacterial ribosomal protein bS20 family.

In terms of biological role, binds directly to 16S ribosomal RNA. The polypeptide is Small ribosomal subunit protein bS20 (Shewanella denitrificans (strain OS217 / ATCC BAA-1090 / DSM 15013)).